We begin with the raw amino-acid sequence, 123 residues long: Large ribosomal subunit protein uL24 (123 aa).

This sequence belongs to the universal ribosomal protein uL24 family. Part of the 50S ribosomal subunit.

Functionally, one of two assembly initiator proteins, it binds directly to the 5'-end of the 23S rRNA, where it nucleates assembly of the 50S subunit. One of the proteins that surrounds the polypeptide exit tunnel on the outside of the subunit. This chain is Large ribosomal subunit protein uL24, found in Kineococcus radiotolerans (strain ATCC BAA-149 / DSM 14245 / SRS30216).